A 211-amino-acid chain; its full sequence is MADS-box protein AGL72 (211 aa).

The MADS-box domain occupies M1–D61. A K-box domain is found at V88–G187.

It localises to the nucleus. In terms of biological role, MADS-box transcription factor that acts with AGL42 and AGL71 in the control of flowering time. Promotes flowering at the shoot apical and axillary meristems. Seems to act through a gibberellin-dependent pathway. Interacts genetically with SOC1 and its expression is directly regulated by SOC1. In Arabidopsis thaliana (Mouse-ear cress), this protein is MADS-box protein AGL72 (AGL72).